The sequence spans 517 residues: Ammonium transporter 3 (517 aa).

Over 1-32 (MLNEPNALLRRDANSTIATVTELFPNEYSNAD) the chain is Extracellular. Residues 33 to 53 (IAYVLLSTVVVFTVTPGIALY) traverse the membrane as a helical segment. The Cytoplasmic segment spans residues 54-69 (YAGMVRKNSALSILTQ). The chain crosses the membrane as a helical span at residues 70–90 (SFLVTAVVFIQWYLFGYSLAC). Topologically, residues 91-118 (SSGSSFYGTLWQGGMNHLWLEPYIPGST) are extracellular. A helical transmembrane segment spans residues 119 to 139 (IPAIVYFPFGGLFAVATAQLF). Over 140–148 (AGAMAERGR) the chain is Cytoplasmic. A helical membrane pass occupies residues 149 to 169 (LIPSLVISFLYITLVYCPQAY). Residues 170–180 (WTWAPNGWLYT) are Extracellular-facing. A helical membrane pass occupies residues 181-201 (LGALDFAGGGPVHISSGFAAL). Over 202 to 272 (AYSLCLGRRI…AHNPPHDAGM (71 aa)) the chain is Cytoplasmic. The helical transmembrane segment at 273–293 (VYIGVVLIWFAWLCFNSGTLL) threads the bilayer. Residues 294-299 (TVNIRT) are Extracellular-facing. The chain crosses the membrane as a helical span at residues 300–320 (AYIMTNTLISSSFGALTWAII). At 321 to 327 (DYIRYRK) the chain is on the cytoplasmic side. A helical membrane pass occupies residues 328-348 (FSTIGICEGAIAGLVGITPAC). G349 is a topological domain (extracellular). Residues 350–370 (FVFPWGAAAGGIVPALVCNFL) traverse the membrane as a helical segment. Topologically, residues 371 to 384 (HDLNEWIGVDETLR) are cytoplasmic. The helical transmembrane segment at 385–405 (VFNLHGIGGIVGSIVLGVVAH) threads the bilayer. At 406-432 (PDVAASDGATVIDGGWAVHHWKQMGYQ) the chain is on the extracellular side. The chain crosses the membrane as a helical span at residues 433–453 (FAGFTSVAAWSFVITAIICLL). The Cytoplasmic segment spans residues 454–517 (VDLVPGLHIR…NIKQEKQDEF (64 aa)).

It belongs to the ammonia transporter channel (TC 1.A.11.2) family.

Its subcellular location is the membrane. Transporter for ammonium to use as a nitrogen source. In Schizosaccharomyces pombe (strain 972 / ATCC 24843) (Fission yeast), this protein is Ammonium transporter 3 (amt3).